The primary structure comprises 61 residues: MAKKSMIAKQQRKQKFKVQEYTRCERCGRPHSVIRKFKLCRICFRELAYKGQIPGVKKASW.

Zn(2+) is bound by residues cysteine 24, cysteine 27, cysteine 40, and cysteine 43.

This sequence belongs to the universal ribosomal protein uS14 family. Zinc-binding uS14 subfamily. As to quaternary structure, part of the 30S ribosomal subunit. Contacts proteins S3 and S10. The cofactor is Zn(2+).

Binds 16S rRNA, required for the assembly of 30S particles and may also be responsible for determining the conformation of the 16S rRNA at the A site. In Macrococcus caseolyticus (strain JCSC5402) (Macrococcoides caseolyticum), this protein is Small ribosomal subunit protein uS14.